We begin with the raw amino-acid sequence, 255 residues long: Alpha-acetolactate decarboxylase (255 aa).

The protein belongs to the alpha-acetolactate decarboxylase family.

It carries out the reaction (2S)-2-acetolactate + H(+) = (R)-acetoin + CO2. It functions in the pathway polyol metabolism; (R,R)-butane-2,3-diol biosynthesis; (R,R)-butane-2,3-diol from pyruvate: step 2/3. Functionally, converts acetolactate into acetoin, which can be excreted by the cells. This may be a mechanism for controlling the internal pH of cells in the stationary stage. The polypeptide is Alpha-acetolactate decarboxylase (alsD) (Bacillus subtilis (strain 168)).